A 424-amino-acid chain; its full sequence is Serine--tRNA ligase (424 aa).

Residue 231–233 (TAE) coordinates L-serine. 262-264 (RAE) provides a ligand contact to ATP. Glu285 serves as a coordination point for L-serine. An ATP-binding site is contributed by 349–352 (EISS). Residue Ser385 coordinates L-serine.

This sequence belongs to the class-II aminoacyl-tRNA synthetase family. Type-1 seryl-tRNA synthetase subfamily. In terms of assembly, homodimer. The tRNA molecule binds across the dimer.

It localises to the cytoplasm. It catalyses the reaction tRNA(Ser) + L-serine + ATP = L-seryl-tRNA(Ser) + AMP + diphosphate + H(+). It carries out the reaction tRNA(Sec) + L-serine + ATP = L-seryl-tRNA(Sec) + AMP + diphosphate + H(+). Its pathway is aminoacyl-tRNA biosynthesis; selenocysteinyl-tRNA(Sec) biosynthesis; L-seryl-tRNA(Sec) from L-serine and tRNA(Sec): step 1/1. Catalyzes the attachment of serine to tRNA(Ser). Is also able to aminoacylate tRNA(Sec) with serine, to form the misacylated tRNA L-seryl-tRNA(Sec), which will be further converted into selenocysteinyl-tRNA(Sec). The protein is Serine--tRNA ligase of Geobacillus thermodenitrificans (strain NG80-2).